Here is a 343-residue protein sequence, read N- to C-terminus: Dihydroorotase (343 aa).

The Zn(2+) site is built by histidine 14 and histidine 16. Substrate is bound by residues 16–18 (HVR) and asparagine 42. 3 residues coordinate Zn(2+): lysine 98, histidine 135, and histidine 173. Lysine 98 carries the post-translational modification N6-carboxylysine. A substrate-binding site is contributed by histidine 135. Leucine 219 contributes to the substrate binding site. Zn(2+) is bound at residue aspartate 247. Aspartate 247 is a catalytic residue. The substrate site is built by histidine 251 and alanine 263.

Belongs to the metallo-dependent hydrolases superfamily. DHOase family. Class II DHOase subfamily. Homodimer. The cofactor is Zn(2+).

The catalysed reaction is (S)-dihydroorotate + H2O = N-carbamoyl-L-aspartate + H(+). It functions in the pathway pyrimidine metabolism; UMP biosynthesis via de novo pathway; (S)-dihydroorotate from bicarbonate: step 3/3. Its function is as follows. Catalyzes the reversible cyclization of carbamoyl aspartate to dihydroorotate. This Marinobacter nauticus (strain ATCC 700491 / DSM 11845 / VT8) (Marinobacter aquaeolei) protein is Dihydroorotase.